Consider the following 539-residue polypeptide: UDP-N-acetylmuramate--L-alanine ligase (539 aa).

Residue 165–171 (GTHGKTT) coordinates ATP.

Belongs to the MurCDEF family.

The protein resides in the cytoplasm. It catalyses the reaction UDP-N-acetyl-alpha-D-muramate + L-alanine + ATP = UDP-N-acetyl-alpha-D-muramoyl-L-alanine + ADP + phosphate + H(+). The protein operates within cell wall biogenesis; peptidoglycan biosynthesis. In terms of biological role, cell wall formation. In Trichodesmium erythraeum (strain IMS101), this protein is UDP-N-acetylmuramate--L-alanine ligase.